A 214-amino-acid polypeptide reads, in one-letter code: LexA repressor (214 aa).

A DNA-binding region (H-T-H motif) is located at residues 26–46; the sequence is VREIGEAVGLSSSSTVHSYLK. Active-site for autocatalytic cleavage activity residues include serine 138 and lysine 175.

This sequence belongs to the peptidase S24 family. As to quaternary structure, homodimer.

The enzyme catalyses Hydrolysis of Ala-|-Gly bond in repressor LexA.. Functionally, represses a number of genes involved in the response to DNA damage (SOS response), including recA and lexA. In the presence of single-stranded DNA, RecA interacts with LexA causing an autocatalytic cleavage which disrupts the DNA-binding part of LexA, leading to derepression of the SOS regulon and eventually DNA repair. The chain is LexA repressor from Desulforamulus reducens (strain ATCC BAA-1160 / DSM 100696 / MI-1) (Desulfotomaculum reducens).